The primary structure comprises 104 residues: MFAVIKTGGKQYRVAANDTITIASLAGEAGEAVTFGEVLLFADGAGATQVGAPTLSGISVTGEIVRHGRDKKVIAFKKRRRQNSRRKRGHRQDHTVVRITGISA.

Basic residues predominate over residues 78–91; it reads KRRRQNSRRKRGHR. Residues 78 to 104 are disordered; sequence KRRRQNSRRKRGHRQDHTVVRITGISA.

Belongs to the bacterial ribosomal protein bL21 family. As to quaternary structure, part of the 50S ribosomal subunit. Contacts protein L20.

In terms of biological role, this protein binds to 23S rRNA in the presence of protein L20. This Methylobacterium radiotolerans (strain ATCC 27329 / DSM 1819 / JCM 2831 / NBRC 15690 / NCIMB 10815 / 0-1) protein is Large ribosomal subunit protein bL21.